Reading from the N-terminus, the 137-residue chain is Protein ApaG (137 aa).

Residues 2–126 form the ApaG domain; sequence PKYQFQVQVQ…FVLEAFSPGQ (125 aa).

This is Protein ApaG from Acidovorax sp. (strain JS42).